An 88-amino-acid chain; its full sequence is MIATEQKKQIISNFARKAGDTGSTEVQIALIDARIKELNEHFKTHKKDFHSKTGLLRLVGKRKKLLDYLKRTELERYKKLIETLGLRK.

The protein belongs to the universal ribosomal protein uS15 family. As to quaternary structure, part of the 30S ribosomal subunit. Forms a bridge to the 50S subunit in the 70S ribosome, contacting the 23S rRNA.

One of the primary rRNA binding proteins, it binds directly to 16S rRNA where it helps nucleate assembly of the platform of the 30S subunit by binding and bridging several RNA helices of the 16S rRNA. Its function is as follows. Forms an intersubunit bridge (bridge B4) with the 23S rRNA of the 50S subunit in the ribosome. This chain is Small ribosomal subunit protein uS15, found in Leptospira interrogans serogroup Icterohaemorrhagiae serovar copenhageni (strain Fiocruz L1-130).